A 671-amino-acid chain; its full sequence is DNA ligase (671 aa).

Residues 32 to 36 (DAEYD), 81 to 82 (SL), and glutamate 113 each bind NAD(+). Lysine 115 acts as the N6-AMP-lysine intermediate in catalysis. NAD(+) is bound by residues arginine 136, glutamate 173, lysine 290, and lysine 314. 4 residues coordinate Zn(2+): cysteine 408, cysteine 411, cysteine 426, and cysteine 432. A BRCT domain is found at 593-671 (EIDSPFAGKT…EAEMLRLFGE (79 aa)).

It belongs to the NAD-dependent DNA ligase family. LigA subfamily. Requires Mg(2+) as cofactor. It depends on Mn(2+) as a cofactor.

The enzyme catalyses NAD(+) + (deoxyribonucleotide)n-3'-hydroxyl + 5'-phospho-(deoxyribonucleotide)m = (deoxyribonucleotide)n+m + AMP + beta-nicotinamide D-nucleotide.. In terms of biological role, DNA ligase that catalyzes the formation of phosphodiester linkages between 5'-phosphoryl and 3'-hydroxyl groups in double-stranded DNA using NAD as a coenzyme and as the energy source for the reaction. It is essential for DNA replication and repair of damaged DNA. This is DNA ligase from Enterobacter sp. (strain 638).